The chain runs to 3036 residues: DmX-like protein 2 (3036 aa).

3 WD repeats span residues 108 to 145 (FLSS…ILEE), 167 to 207 (KTSV…KSSI), and 230 to 278 (AHPR…EDCL). Phosphoserine is present on Ser326. Residues 417 to 480 (KQVDHENDDA…EGSPRTYSRL (64 aa)) are disordered. Positions 422 to 434 (ENDDADREDEEHS) are enriched in acidic residues. A compositionally biased stretch (basic and acidic residues) spans 435 to 473 (QEDRERGLHMKLDHDLSLDRESEAGTGSSEHEDGEREGS). Position 473 is a phosphoserine (Ser473). Residues 492–532 (DRKIETLLTEWNKNPDMLFTIHPVDGTFLVWHVKYLDEYNP) form a WD 4 repeat. Ser588 bears the Phosphoserine mark. 3 WD repeats span residues 595 to 634 (HSRS…KSAF), 751 to 803 (LHTS…RKLL), and 878 to 920 (QPSQ…VQAC). Residues 932–959 (SLLSVPGQKNVDSSPETSPSVSPMPHSS) are disordered. 2 positions are modified to phosphoserine: Ser944 and Ser945. Over residues 949–959 (SPSVSPMPHSS) the composition is skewed to low complexity. A WD 8 repeat occupies 1000–1037 (LSSSSIYPVCLAPYLVVTTCSDNKVRFWKCCMEANPEC). Ser1140, Ser1143, and Ser1151 each carry phosphoserine. WD repeat units follow at residues 1163–1204 (PNIK…VTEQ) and 1244–1281 (GTPS…VKFG). Residues Ser1287 and Ser1400 each carry the phosphoserine modification. Thr1417 carries the post-translational modification Phosphothreonine. Ser1857 carries the phosphoserine modification. Positions 1927 to 1936 (ISHRMDDVPS) are enriched in basic and acidic residues. The segment at 1927–1952 (ISHRMDDVPSHSKALSDGNGSSGIEW) is disordered. Ser1984 bears the Phosphoserine mark. A disordered region spans residues 1999–2033 (KSTDAREKDKQSDQKASDPNMLLTPQEEDDPEGDT). Basic and acidic residues predominate over residues 2001–2014 (TDAREKDKQSDQKA). Thr2022 bears the Phosphothreonine mark. The span at 2024 to 2033 (QEEDDPEGDT) shows a compositional bias: acidic residues. Residues 2122 to 2153 (GSYERHQIERRRLQAKREHAERRKSWLQKNQD) adopt a coiled-coil conformation. Ser2399 and Ser2640 each carry phosphoserine. 6 WD repeats span residues 2761-2800 (RNLH…QLVC), 2804-2843 (AGNA…SNPK), 2850-2892 (CHSK…GNSL), 2898-2937 (CHDH…LIHT), 2940-2979 (AHDS…LIHS), and 2992-3030 (NIGA…NIPN).

Interacts with MADD and RAB3GAP.

The protein localises to the cytoplasmic vesicle. It is found in the secretory vesicle. It localises to the synaptic vesicle membrane. The protein resides in the neuronal dense core vesicle. Its function is as follows. May serve as a scaffold protein for MADD and RAB3GA on synaptic vesicles. Plays a role in the brain as a key controller of neuronal and endocrine homeostatic processes. The chain is DmX-like protein 2 (DMXL2) from Homo sapiens (Human).